The primary structure comprises 390 residues: Transposase for insertion sequence element IS256 in transposon Tn4001 (390 aa).

It belongs to the transposase mutator family.

Required for the transposition of the insertion element. This chain is Transposase for insertion sequence element IS256 in transposon Tn4001, found in Enterococcus faecalis (strain ATCC 700802 / V583).